A 329-amino-acid polypeptide reads, in one-letter code: uncharacterized protein (329 aa).

The SIS domain occupies 37 to 180 (LAEKILGHSG…AMLLFHSRGV (144 aa)). 52–57 (GVGKSG) lines the ATP pocket. 2 consecutive CBS domains span residues 206–265 (MFPK…GGEV) and 274–329 (MTAN…AGLL).

This sequence belongs to the SIS family. GutQ/KpsF subfamily.

This is an uncharacterized protein from Chlamydia pneumoniae (Chlamydophila pneumoniae).